The chain runs to 10287 residues: Putative E3 ubiquitin-protein ligase protein PFF1365c (10287 aa).

Residues 47 to 82 (TRFFKSISNYGEFLLLQSSSRVISSYEHILRLLHQA) form a TPR 1 repeat. Residues 566–589 (TNKSRDNINQNTNTNNNNNNNNNN) are compositionally biased toward low complexity. The disordered stretch occupies residues 566 to 592 (TNKSRDNINQNTNTNNNNNNNNNNDGD). The TPR 2 repeat unit spans residues 631 to 665 (YPMFLKIQNKPQRCLKDISKPCEYYSNTLPIYGSY). 3 disordered regions span residues 740–823 (KSSV…NKKK), 1221–1251 (NNSN…SSSS), and 1599–1670 (YVDD…DDNN). 3 stretches are compositionally biased toward low complexity: residues 767–810 (KANN…NNNN), 1221–1235 (NNSN…THNS), and 1242–1251 (SSSTYSSSSS). Residues 1601–1635 (DDNEEDEGEEDKSEDYEYCDDEQQNDVYEDTEEES) are compositionally biased toward acidic residues. A compositionally biased stretch (basic residues) spans 1641 to 1653 (RKERRVHQKKKNS). The segment covering 1654–1670 (KVSINKKTNNSLSDDNN) has biased composition (low complexity). The next 3 membrane-spanning stretches (helical) occupy residues 1821–1841 (ACTF…TLFV), 1860–1880 (LKMA…GLLT), and 1900–1920 (ECCI…TIMI). The span at 2070 to 2080 (SRRGIPLKKKS) shows a compositional bias: basic residues. The tract at residues 2070-2112 (SRRGIPLKKKSERNNSKEENVNNMDHNNNNNSNSNNNNFFHRG) is disordered. A compositionally biased stretch (low complexity) spans 2090–2107 (VNNMDHNNNNNSNSNNNN). Residues 2116–2145 (TNPRNNNITCDRKNMEFLKKLMKNDHDAVQ) form an ANK 1 repeat. Residues 2141–2175 (HDAVQCLGKAYSVFHKNFERAQIAFVAVFLHLTGY) form a TPR 3 repeat. A compositionally biased stretch (polar residues) spans 2854–2865 (NLSSNKRSQKGY). 9 disordered regions span residues 2854 to 2945 (NLSS…SKEP), 3087 to 3113 (KNRN…NNIN), 3303 to 3344 (NGHT…NDRG), 3561 to 3599 (FSKG…SSIN), 3942 to 3998 (TMEN…KDHI), 4076 to 4157 (LFNS…INYY), 4695 to 4716 (EKKN…KEEG), 4886 to 4972 (SPYF…LRNS), and 4984 to 5051 (YRNK…SNAD). A compositionally biased stretch (basic and acidic residues) spans 2886-2929 (SLDKYNDKEKKNDKINNGDTKNSDDGKIDMDDKKYYNDDLKNSD). The segment covering 3090–3113 (NSNNNNNNNNTNNSNNSNNNNNIN) has biased composition (low complexity). Over residues 3316–3335 (YDDDNCDNYDNYDNDNENDN) the composition is skewed to acidic residues. 2 stretches are compositionally biased toward basic and acidic residues: residues 3567–3579 (KKEM…EKIK) and 3965–3974 (PSKDKSKHYN). The span at 3975–3992 (DNNNNNNDDNNSNNNNDY) shows a compositional bias: low complexity. A compositionally biased stretch (basic and acidic residues) spans 4079 to 4094 (SKKDGSSNNDKNDNSN). Low complexity-rich tracts occupy residues 4095-4116 (KNRN…NNNN) and 4124-4157 (NINN…INYY). Over residues 4906 to 4917 (YNIQNSDNSNIG) the composition is skewed to polar residues. Low complexity-rich tracts occupy residues 4918-4942 (DSEL…DSLN) and 4953-4972 (NSSS…LRNS). Positions 5026–5045 (KIKKNKSYKNKTHKNKKQKN) are enriched in basic residues. The next 5 membrane-spanning stretches (helical) occupy residues 5058-5078 (LYGY…CIIL), 5106-5126 (FIKL…KYFA), 5552-5572 (EEIL…YYLG), 5716-5736 (LPIF…VVYI), and 5815-5835 (FLSY…NQII). Positions 5848–5917 (VNKNKGNDNV…NNNNVRNSNN (70 aa)) are disordered. The stretch at 6004–6032 (GINSLYVNGTNGNLKTDKILLHNFSNFDL) is one ANK 2 repeat. One copy of the TPR 4 repeat lies at 6051-6084 (LVHYFACAAYYIKRADVYNIMNYYNEHTHANFKQ). Disordered stretches follow at residues 6495–6527 (EEEK…HEKK), 7123–7147 (EKKK…DNNR), and 7183–7217 (NKNN…CSNS). Basic and acidic residues predominate over residues 6501–6527 (ENEKEVEKDENVHDEKDKVEQIEHEKK). Positions 7129–7147 (GSNNIGSNTNIHELSDNNR) are enriched in polar residues. 2 TPR repeats span residues 7347–7380 (SNDS…KPFI) and 7577–7610 (NNNN…YDDI). The span at 7571–7583 (DDGNNNNNNNDSM) shows a compositional bias: low complexity. Disordered regions lie at residues 7571–7590 (DDGN…KDDM) and 7653–7712 (SNER…VNNI). A compositionally biased stretch (basic and acidic residues) spans 7696–7706 (DNNKDKDDGNH). ANK repeat units lie at residues 7809 to 7839 (KYLT…NPNK), 7845 to 7875 (EKET…QVNK), and 7880 to 7917 (GNTA…DLTI). Disordered regions lie at residues 8208–8300 (LKDD…SAKN) and 8413–8448 (ALNS…NNYN). Residues 8219 to 8259 (YQKPYDKKVINKNKNDNYDKNDNYDKKDNYDTNDKNDKNNC) show a composition bias toward basic and acidic residues. Residues 8277 to 8300 (VMNTNSSGRRTISKNSPNLSSAKN) are compositionally biased toward polar residues. Residues 8415–8448 (NSNMSNNNNNNNNSNNNNNNNSNNNNNNYNNNYN) show a composition bias toward low complexity. TPR repeat units follow at residues 8782–8815 (QTCD…SNNI) and 9550–9584 (DLPI…ITSS). Disordered regions lie at residues 9795 to 9818 (MGSD…HKYD) and 9913 to 9979 (NVLL…SKNT). Basic and acidic residues-rich tracts occupy residues 9800–9818 (ILKD…HKYD) and 9913–9930 (NVLL…DDIR). Low complexity predominate over residues 9931–9971 (NNMNNNNNNNNNNNNNNNNNNNNNNNNNNNNNNNNNNNNLN). The HECT domain occupies 9938–10273 (NNNNNNNNNN…IKNCTAIDLD (336 aa)). Cys-10241 (glycyl thioester intermediate) is an active-site residue.

It is found in the membrane. The enzyme catalyses S-ubiquitinyl-[E2 ubiquitin-conjugating enzyme]-L-cysteine + [acceptor protein]-L-lysine = [E2 ubiquitin-conjugating enzyme]-L-cysteine + N(6)-ubiquitinyl-[acceptor protein]-L-lysine.. The protein operates within protein modification; protein ubiquitination. In terms of biological role, putative E3 ubiquitin-protein ligase. The sequence is that of Putative E3 ubiquitin-protein ligase protein PFF1365c from Plasmodium falciparum (isolate 3D7).